The sequence spans 89 residues: Large ribosomal subunit protein bL27 (89 aa).

Residues 1–22 form a disordered region; that stretch reads MAHKKGASSSRNGRDSNAQRLG. Over residues 7–19 the composition is skewed to polar residues; that stretch reads ASSSRNGRDSNAQ.

This sequence belongs to the bacterial ribosomal protein bL27 family.

The chain is Large ribosomal subunit protein bL27 from Cutibacterium acnes (strain DSM 16379 / KPA171202) (Propionibacterium acnes).